Here is a 546-residue protein sequence, read N- to C-terminus: Phenylalanine--tRNA ligase beta subunit (546 aa).

The B5 domain maps to 266–342 (LAPAERVVSV…IAYGIENFDA (77 aa)). Residues Asp-320, Asp-326, Glu-329, and Asp-330 each contribute to the Mg(2+) site.

This sequence belongs to the phenylalanyl-tRNA synthetase beta subunit family. Type 2 subfamily. In terms of assembly, tetramer of two alpha and two beta subunits. Mg(2+) is required as a cofactor.

It localises to the cytoplasm. It carries out the reaction tRNA(Phe) + L-phenylalanine + ATP = L-phenylalanyl-tRNA(Phe) + AMP + diphosphate + H(+). The sequence is that of Phenylalanine--tRNA ligase beta subunit from Methanoculleus marisnigri (strain ATCC 35101 / DSM 1498 / JR1).